We begin with the raw amino-acid sequence, 602 residues long: Aspartate--tRNA(Asp/Asn) ligase (602 aa).

Glutamate 177 provides a ligand contact to L-aspartate. An aspartate region spans residues 201-204 (QLFK). Arginine 223 contacts L-aspartate. Residues 223-225 (RDE) and glutamine 232 each bind ATP. Position 460 (histidine 460) interacts with L-aspartate. Glutamate 497 contributes to the ATP binding site. Arginine 504 is an L-aspartate binding site. Position 549-552 (549-552 (GLDR)) interacts with ATP.

The protein belongs to the class-II aminoacyl-tRNA synthetase family. Type 1 subfamily. As to quaternary structure, homodimer.

The protein resides in the cytoplasm. The catalysed reaction is tRNA(Asx) + L-aspartate + ATP = L-aspartyl-tRNA(Asx) + AMP + diphosphate. Aspartyl-tRNA synthetase with relaxed tRNA specificity since it is able to aspartylate not only its cognate tRNA(Asp) but also tRNA(Asn). Reaction proceeds in two steps: L-aspartate is first activated by ATP to form Asp-AMP and then transferred to the acceptor end of tRNA(Asp/Asn). The sequence is that of Aspartate--tRNA(Asp/Asn) ligase from Prochlorococcus marinus (strain MIT 9515).